Reading from the N-terminus, the 321-residue chain is DNA repair and recombination protein RadA (321 aa).

111 to 118 (GEFGSGKT) contacts ATP.

Belongs to the eukaryotic RecA-like protein family.

Its function is as follows. Involved in DNA repair and in homologous recombination. Binds and assemble on single-stranded DNA to form a nucleoprotein filament. Hydrolyzes ATP in a ssDNA-dependent manner and promotes DNA strand exchange between homologous DNA molecules. This chain is DNA repair and recombination protein RadA, found in Sulfolobus acidocaldarius (strain ATCC 33909 / DSM 639 / JCM 8929 / NBRC 15157 / NCIMB 11770).